Consider the following 345-residue polypeptide: Neuropeptide receptor 15 (345 aa).

The Extracellular portion of the chain corresponds to 1-11 (MSVAVGIPYVC). A helical transmembrane segment spans residues 12–32 (FFIILSVVGIIGNVIVIYAIA). Topologically, residues 33 to 40 (GDRNMRKS) are cytoplasmic. Residues 41-61 (VMNILLLNLAVADLANLIFTI) form a helical membrane-spanning segment. Residues 62-90 (PEWIPPVFFGSTDWLFPSFLCPVCRYLEC) lie on the Extracellular side of the membrane. Residues Cys82 and Cys171 are joined by a disulfide bond. Residues 91 to 111 (VFLFASISTQMIVCIERYIAI) traverse the membrane as a helical segment. Over 112-125 (VLPMQARQLCSRRN) the chain is Cytoplasmic. Residues 126 to 146 (VLITVLVDWIFVACFASPYAV) traverse the membrane as a helical segment. At 147–187 (WHSVKTKDRNTNSLRFKLFQLSATCSNTVGKSTWWQGYKLT) the chain is on the extracellular side. The chain crosses the membrane as a helical span at residues 188–208 (EFLAFYFVPCFIITVVYTKVA). At 209–246 (KCLWCKDPTLQCETRSCLDNKSSSRSSDALRTRRNVVK) the chain is on the cytoplasmic side. The chain crosses the membrane as a helical span at residues 247–267 (MLIACVAVYFVCYSPIQVIFL). Residues 268–281 (SKAVLNVTIHPPYD) lie on the Extracellular side of the membrane. Residues 282 to 304 (FILLMNALAMTCSASNPLLYTLF) form a helical membrane-spanning segment. Over 305–345 (SQKFRRRLRDVLYCPSDVENETKTYYSINNTSIVGPRASFN) the chain is Cytoplasmic.

Belongs to the G-protein coupled receptor 1 family. Expressed in pharyngeal muscle and AWC, ASG, ASE, ASI, and ASJ sensory neurons. Expressed in ASI neuron. Expressed in AFD neurons and in AVK interneuron.

Its subcellular location is the cell membrane. Its function is as follows. Probable receptor for neuropeptide ligand nlp-8 that plays a role in octopamine signaling and specifically, the octopamine inhibition of aversion responses in olfactory sensory neurons. Plays a crucial role in daf-7 expression. Acts in concert with gpa-4 to activate TGF-beta-like daf-7 secretion in the ASI neuron, thereby promoting larval development and inhibition of dauer diapause. Suppresses immune response against pathogenic infection by inhibiting transcription regulators elt-2 and hlh-30 in ASJ neuron. Promotes pathogen avoidance behavior via intestinal gon-2, independent of aerotaxis. The protein is Neuropeptide receptor 15 (npr-15) of Caenorhabditis elegans.